We begin with the raw amino-acid sequence, 109 residues long: Major allergen I polypeptide chain 2 (109 aa).

The first 17 residues, 1-17 (MRGALLVLALLVTQALG), serve as a signal peptide directing secretion. Asn-50 carries N-linked (GlcNAc...) asparagine glycosylation.

It belongs to the secretoglobin family. As to quaternary structure, heterotetramer composed of two non-covalently linked disulfide-linked heterodimer of chains 1 and 2. As to expression, the long form is preferentially expressed in the salivary gland, while the short form is preferentially expressed in the skin.

It is found in the secreted. The sequence is that of Major allergen I polypeptide chain 2 (CH2) from Felis catus (Cat).